A 395-amino-acid chain; its full sequence is 1-deoxy-D-xylulose 5-phosphate reductoisomerase (395 aa).

NADPH is bound by residues Thr-15, Gly-16, Ser-17, Ile-18, Gly-41, Asn-43, and Asn-126. Residue Lys-127 coordinates 1-deoxy-D-xylulose 5-phosphate. Residue Glu-128 coordinates NADPH. Mn(2+) is bound at residue Asp-152. The 1-deoxy-D-xylulose 5-phosphate site is built by Ser-153, Glu-154, Ser-178, and His-201. Glu-154 contacts Mn(2+). Gly-207 provides a ligand contact to NADPH. 1-deoxy-D-xylulose 5-phosphate-binding residues include Ser-214, Asn-219, Lys-220, and Glu-223. Glu-223 provides a ligand contact to Mn(2+).

Belongs to the DXR family. Requires Mg(2+) as cofactor. Mn(2+) is required as a cofactor.

The enzyme catalyses 2-C-methyl-D-erythritol 4-phosphate + NADP(+) = 1-deoxy-D-xylulose 5-phosphate + NADPH + H(+). The protein operates within isoprenoid biosynthesis; isopentenyl diphosphate biosynthesis via DXP pathway; isopentenyl diphosphate from 1-deoxy-D-xylulose 5-phosphate: step 1/6. Catalyzes the NADPH-dependent rearrangement and reduction of 1-deoxy-D-xylulose-5-phosphate (DXP) to 2-C-methyl-D-erythritol 4-phosphate (MEP). This Ruegeria pomeroyi (strain ATCC 700808 / DSM 15171 / DSS-3) (Silicibacter pomeroyi) protein is 1-deoxy-D-xylulose 5-phosphate reductoisomerase.